Consider the following 95-residue polypeptide: CRISPR-associated endoribonuclease Cas2 (95 aa).

Asp10 serves as a coordination point for Mg(2+).

Belongs to the CRISPR-associated endoribonuclease Cas2 protein family. As to quaternary structure, homodimer, forms a heterotetramer with a Cas1 homodimer. Requires Mg(2+) as cofactor.

In terms of biological role, CRISPR (clustered regularly interspaced short palindromic repeat), is an adaptive immune system that provides protection against mobile genetic elements (viruses, transposable elements and conjugative plasmids). CRISPR clusters contain sequences complementary to antecedent mobile elements and target invading nucleic acids. CRISPR clusters are transcribed and processed into CRISPR RNA (crRNA). Functions as a ssRNA-specific endoribonuclease. Involved in the integration of spacer DNA into the CRISPR cassette. In Geobacter sulfurreducens (strain ATCC 51573 / DSM 12127 / PCA), this protein is CRISPR-associated endoribonuclease Cas2.